The sequence spans 285 residues: Ribosomal protein L11 methyltransferase (285 aa).

Residues threonine 131, glycine 154, aspartate 176, and asparagine 223 each coordinate S-adenosyl-L-methionine.

The protein belongs to the methyltransferase superfamily. PrmA family.

The protein localises to the cytoplasm. It catalyses the reaction L-lysyl-[protein] + 3 S-adenosyl-L-methionine = N(6),N(6),N(6)-trimethyl-L-lysyl-[protein] + 3 S-adenosyl-L-homocysteine + 3 H(+). Methylates ribosomal protein L11. This Brucella abortus (strain S19) protein is Ribosomal protein L11 methyltransferase.